The sequence spans 54 residues: UPF0391 membrane protein BAV1230 (54 aa).

Transmembrane regions (helical) follow at residues 5–25 (AAVF…GIAA) and 27–47 (AAGI…LSVL).

It belongs to the UPF0391 family.

The protein localises to the cell membrane. This is UPF0391 membrane protein BAV1230 from Bordetella avium (strain 197N).